Reading from the N-terminus, the 315-residue chain is Methionyl-tRNA formyltransferase (315 aa).

113-116 is a binding site for (6S)-5,6,7,8-tetrahydrofolate; it reads SLLP.

Belongs to the Fmt family.

The catalysed reaction is L-methionyl-tRNA(fMet) + (6R)-10-formyltetrahydrofolate = N-formyl-L-methionyl-tRNA(fMet) + (6S)-5,6,7,8-tetrahydrofolate + H(+). Attaches a formyl group to the free amino group of methionyl-tRNA(fMet). The formyl group appears to play a dual role in the initiator identity of N-formylmethionyl-tRNA by promoting its recognition by IF2 and preventing the misappropriation of this tRNA by the elongation apparatus. This Escherichia coli O17:K52:H18 (strain UMN026 / ExPEC) protein is Methionyl-tRNA formyltransferase.